Consider the following 312-residue polypeptide: MDDKFDDDALPNSKTTAKDYEDKLPEYDYTTTFPNTWMRLREPFREYFAEFVGVAVLIIFGVGADCQVVLSANTGVASSPKGSYLSLNCGWAIGTAMGVWISGGISGGHINPAVTLAMATWRGFPWWKVPGFIFAQLLGGIVGAGLVYVNYIHAIDIVEGGRHIRTLDTAGLFATYAADYMTNLSCFFSEFLATAVLIIVIHAMNDKRNTPPPAGIVPFVLFFLILGIGASLGMETGYAINPARDLGPRMLTAMVGYGRQVFAFRNQYWIWCPVLAPFLGAQVGTIFYDLFFYKGQDNVFGRLGSHIHISPA.

Residues 1–50 lie on the Cytoplasmic side of the membrane; sequence MDDKFDDDALPNSKTTAKDYEDKLPEYDYTTTFPNTWMRLREPFREYFAE. A helical transmembrane segment spans residues 51-71; that stretch reads FVGVAVLIIFGVGADCQVVLS. Residues 72–89 lie on the Extracellular side of the membrane; that stretch reads ANTGVASSPKGSYLSLNC. A helical transmembrane segment spans residues 90–110; the sequence is GWAIGTAMGVWISGGISGGHI. Residues 111–113 carry the NPA 1 motif; the sequence is NPA. The Cytoplasmic segment spans residues 111–128; the sequence is NPAVTLAMATWRGFPWWK. The helical transmembrane segment at 129–149 threads the bilayer; sequence VPGFIFAQLLGGIVGAGLVYV. Residues 150-183 are Extracellular-facing; it reads NYIHAIDIVEGGRHIRTLDTAGLFATYAADYMTN. The N-linked (GlcNAc...) asparagine glycan is linked to Asn183. Residues 184–204 form a helical membrane-spanning segment; it reads LSCFFSEFLATAVLIIVIHAM. Topologically, residues 205–213 are cytoplasmic; the sequence is NDKRNTPPP. The helical transmembrane segment at 214–234 threads the bilayer; the sequence is AGIVPFVLFFLILGIGASLGM. Topologically, residues 235-267 are extracellular; that stretch reads ETGYAINPARDLGPRMLTAMVGYGRQVFAFRNQ. Residues 241–243 carry the NPA 2 motif; sequence NPA. The chain crosses the membrane as a helical span at residues 268-288; the sequence is YWIWCPVLAPFLGAQVGTIFY. Over 289–312 the chain is Cytoplasmic; that stretch reads DLFFYKGQDNVFGRLGSHIHISPA.

It belongs to the MIP/aquaporin (TC 1.A.8) family.

Its subcellular location is the membrane. It catalyses the reaction H2O(in) = H2O(out). Functionally, water channel required to facilitate the transport of water across membranes. Does not mediate the transport carbon dioxide nor nitric oxide across the membrane. Plays a key role in root water transport of mycorrhizal plant such ectomycorrhizal white spruce or trembling aspen via the hydration at the hyphal-root interphase. Contributes in fungal cellular processes during the basidiocarp formation. The sequence is that of Aquaporin-6 from Laccaria bicolor (Bicoloured deceiver).